The sequence spans 227 residues: Thymidine kinase (227 aa).

ATP is bound by residues 15 to 22 (GSMFSGKT) and 87 to 90 (DEAQ). Catalysis depends on Glu-88, which acts as the Proton acceptor. Residues Cys-144, Cys-147, Cys-176, and Cys-179 each contribute to the Zn(2+) site. A disordered region spans residues 198–227 (RAVATDDADASTNEADPEAADAASADGTAA). Residues 217–227 (ADAASADGTAA) show a composition bias toward low complexity.

Belongs to the thymidine kinase family. As to quaternary structure, homotetramer.

It localises to the cytoplasm. It catalyses the reaction thymidine + ATP = dTMP + ADP + H(+). The sequence is that of Thymidine kinase from Salinibacter ruber (strain DSM 13855 / M31).